The primary structure comprises 362 residues: MSQTYNVTLLPGDGIGPEIMAVAVAVLGKVADQFGFAFNFQEALIGGAAIDATGQPLPEATLAQAKDSDAVLLAAIGGYAWDNLPRSQRPETGLLAIREGLGLFANLRPATIFPQLIDASSLKREVVEGVDIMVVRELTGGIYFGKPKGIFETETGEKRGVNTMAYTVGEIDRIAKVAFETARKRRGQLCSVDKANVLDVSQLWRDRVMAIAVDYPDVELSHLYVDNAAMQLVRSPRQFDTIVTGNLFGDILSDIAAMLTGSIGMLPSASLGSDGPGLFEPVHGSAPDIAGQDKANPLAQVLSAAMMLRYGLDQPQAADRLEDAVKKVLEQGYRTGDILSPGTQLVGCRQMGEQLLSILDEM.

78–91 is a binding site for NAD(+); the sequence is GYAWDNLPRSQRPE. Substrate-binding residues include arginine 98, arginine 108, arginine 136, and aspartate 226. Residues aspartate 226, aspartate 250, and aspartate 254 each contribute to the Mg(2+) site. Residue 284–296 participates in NAD(+) binding; that stretch reads GSAPDIAGQDKAN.

It belongs to the isocitrate and isopropylmalate dehydrogenases family. LeuB type 1 subfamily. In terms of assembly, homodimer. The cofactor is Mg(2+). Mn(2+) is required as a cofactor.

The protein resides in the cytoplasm. It carries out the reaction (2R,3S)-3-isopropylmalate + NAD(+) = 4-methyl-2-oxopentanoate + CO2 + NADH. The protein operates within amino-acid biosynthesis; L-leucine biosynthesis; L-leucine from 3-methyl-2-oxobutanoate: step 3/4. Catalyzes the oxidation of 3-carboxy-2-hydroxy-4-methylpentanoate (3-isopropylmalate) to 3-carboxy-4-methyl-2-oxopentanoate. The product decarboxylates to 4-methyl-2 oxopentanoate. The sequence is that of 3-isopropylmalate dehydrogenase (leuB) from Synechocystis sp. (strain ATCC 27184 / PCC 6803 / Kazusa).